Reading from the N-terminus, the 299-residue chain is Probable arylamine N-acetyltransferase 2 (299 aa).

The active-site Acyl-thioester intermediate is the Cys75. Active-site residues include His115 and Asp130.

This sequence belongs to the arylamine N-acetyltransferase family.

It catalyses the reaction an arylamine + acetyl-CoA = an N-acetylarylamine + CoA. This chain is Probable arylamine N-acetyltransferase 2, found in Dictyostelium discoideum (Social amoeba).